Consider the following 59-residue polypeptide: Sperm protamine P1-type (59 aa).

Positions 1 to 59 (MARYRRNRSRSRSRRRRRRRGGRGGRRGRRRRRHGQRRRGRRGRERTRRRRRRRRRSSS) are disordered.

This sequence belongs to the protamine P1 family. As to expression, testis.

The protein resides in the nucleus. Its subcellular location is the chromosome. In terms of biological role, protamines substitute for histones in the chromatin of sperm during the haploid phase of spermatogenesis. They compact sperm DNA into a highly condensed, stable and inactive complex. The polypeptide is Sperm protamine P1-type (Chrysemys picta bellii (Western painted turtle)).